Reading from the N-terminus, the 168-residue chain is NADH-quinone oxidoreductase subunit B (168 aa).

Cys49, Cys50, Cys114, and Cys144 together coordinate [4Fe-4S] cluster.

This sequence belongs to the complex I 20 kDa subunit family. In terms of assembly, NDH-1 is composed of 14 different subunits. Subunits NuoB, C, D, E, F, and G constitute the peripheral sector of the complex. [4Fe-4S] cluster serves as cofactor.

Its subcellular location is the cell membrane. It catalyses the reaction a quinone + NADH + 5 H(+)(in) = a quinol + NAD(+) + 4 H(+)(out). In terms of biological role, NDH-1 shuttles electrons from NADH, via FMN and iron-sulfur (Fe-S) centers, to quinones in the respiratory chain. Couples the redox reaction to proton translocation (for every two electrons transferred, four hydrogen ions are translocated across the cytoplasmic membrane), and thus conserves the redox energy in a proton gradient. This Wolbachia sp. subsp. Brugia malayi (strain TRS) protein is NADH-quinone oxidoreductase subunit B.